Here is a 352-residue protein sequence, read N- to C-terminus: Anthranilate phosphoribosyltransferase (352 aa).

Residues glycine 96, 99-100 (GS), serine 104, 106-109 (NIST), 124-132 (KHGNRSVSS), and serine 136 each bind 5-phospho-alpha-D-ribose 1-diphosphate. Glycine 96 is an anthranilate binding site. Position 108 (serine 108) interacts with Mg(2+). Asparagine 127 contributes to the anthranilate binding site. Arginine 182 lines the anthranilate pocket. Positions 241 and 242 each coordinate Mg(2+).

Belongs to the anthranilate phosphoribosyltransferase family. In terms of assembly, homodimer. The cofactor is Mg(2+).

It catalyses the reaction N-(5-phospho-beta-D-ribosyl)anthranilate + diphosphate = 5-phospho-alpha-D-ribose 1-diphosphate + anthranilate. It participates in amino-acid biosynthesis; L-tryptophan biosynthesis; L-tryptophan from chorismate: step 2/5. Functionally, catalyzes the transfer of the phosphoribosyl group of 5-phosphorylribose-1-pyrophosphate (PRPP) to anthranilate to yield N-(5'-phosphoribosyl)-anthranilate (PRA). This is Anthranilate phosphoribosyltransferase from Syntrophotalea carbinolica (strain DSM 2380 / NBRC 103641 / GraBd1) (Pelobacter carbinolicus).